Here is a 113-residue protein sequence, read N- to C-terminus: Retrotransposon Gag-like protein 8 (113 aa).

Belongs to the FAM127 family.

This Bos taurus (Bovine) protein is Retrotransposon Gag-like protein 8 (RTL8A).